A 164-amino-acid chain; its full sequence is MRCPKCNYHKSSVVDSRQAEDGNTIRRRRECEQCHTRFTTFERVEELPLLVIKKDGTREQFSRDKILNGVVQSAQKRPVSSTDIENVISRIEQKVRTTYENEVSSTAIGNLVMDELAELDEITYVRFASVYKSFKDVDEIEELLQQITNRVRGKKKRLNNDETN.

A zinc finger lies at 3-34; the sequence is CPKCNYHKSSVVDSRQAEDGNTIRRRRECEQC. The region spanning 49–139 is the ATP-cone domain; the sequence is LLVIKKDGTR…VYKSFKDVDE (91 aa).

Belongs to the NrdR family. Zn(2+) serves as cofactor.

Its function is as follows. Negatively regulates transcription of bacterial ribonucleotide reductase nrd genes and operons by binding to NrdR-boxes. In Streptococcus pyogenes serotype M6 (strain ATCC BAA-946 / MGAS10394), this protein is Transcriptional repressor NrdR.